Here is a 525-residue protein sequence, read N- to C-terminus: GMP synthase [glutamine-hydrolyzing] (525 aa).

The 199-residue stretch at 9–207 (RILILDFGSQ…VRDICQCEAL (199 aa)) folds into the Glutamine amidotransferase type-1 domain. Residue Cys86 is the Nucleophile of the active site. Residues His181 and Glu183 contribute to the active site. In terms of domain architecture, GMPS ATP-PPase spans 208–400 (WTPAKIIDDA…LGLPYDMLYR (193 aa)). Position 235–241 (235–241 (SGGVDSS)) interacts with ATP.

As to quaternary structure, homodimer.

The enzyme catalyses XMP + L-glutamine + ATP + H2O = GMP + L-glutamate + AMP + diphosphate + 2 H(+). It functions in the pathway purine metabolism; GMP biosynthesis; GMP from XMP (L-Gln route): step 1/1. Catalyzes the synthesis of GMP from XMP. This is GMP synthase [glutamine-hydrolyzing] from Shigella flexneri.